We begin with the raw amino-acid sequence, 119 residues long: Putative membrane protein insertion efficiency factor (119 aa).

The protein belongs to the UPF0161 family.

It is found in the cell inner membrane. Its function is as follows. Could be involved in insertion of integral membrane proteins into the membrane. The sequence is that of Putative membrane protein insertion efficiency factor from Agrobacterium fabrum (strain C58 / ATCC 33970) (Agrobacterium tumefaciens (strain C58)).